Consider the following 311-residue polypeptide: tRNA dimethylallyltransferase (311 aa).

An ATP-binding site is contributed by 12–19; it reads GPTASGKT. Residue 14–19 coordinates substrate; the sequence is TASGKT. Interaction with substrate tRNA regions lie at residues 37–40, 161–165, and 241–246; these read DSAL, QRINR, and RCVGYR.

Belongs to the IPP transferase family. As to quaternary structure, monomer. Mg(2+) is required as a cofactor.

The catalysed reaction is adenosine(37) in tRNA + dimethylallyl diphosphate = N(6)-dimethylallyladenosine(37) in tRNA + diphosphate. Functionally, catalyzes the transfer of a dimethylallyl group onto the adenine at position 37 in tRNAs that read codons beginning with uridine, leading to the formation of N6-(dimethylallyl)adenosine (i(6)A). In Histophilus somni (strain 2336) (Haemophilus somnus), this protein is tRNA dimethylallyltransferase.